The primary structure comprises 448 residues: Asparagine--tRNA ligase (448 aa).

It belongs to the class-II aminoacyl-tRNA synthetase family. In terms of assembly, homodimer.

It is found in the cytoplasm. It carries out the reaction tRNA(Asn) + L-asparagine + ATP = L-asparaginyl-tRNA(Asn) + AMP + diphosphate + H(+). This Streptococcus sanguinis (strain SK36) protein is Asparagine--tRNA ligase.